The following is a 151-amino-acid chain: MNPLRKKRLIIILAILVGVGAAVGLALSALQQNINLFYTPTQIANGEAPQDTRIRAGGMVEKGSLQRSTDSLDVKFVVTDFNKSVTITYRGILPDLFREGQGIVALGKLNADGVVVADEVLAKHDEKYMPPEVTKALKDSGQSAPTPAKEG.

Residues 1–8 (MNPLRKKR) lie on the Cytoplasmic side of the membrane. Residues 9 to 29 (LIIILAILVGVGAAVGLALSA) form a helical; Signal-anchor for type II membrane protein membrane-spanning segment. Topologically, residues 30-151 (LQQNINLFYT…QSAPTPAKEG (122 aa)) are periplasmic. The heme site is built by H124 and Y128. Residues 131–151 (PEVTKALKDSGQSAPTPAKEG) are disordered.

This sequence belongs to the CcmE/CycJ family.

The protein resides in the cell inner membrane. Its function is as follows. Heme chaperone required for the biogenesis of c-type cytochromes. Transiently binds heme delivered by CcmC and transfers the heme to apo-cytochromes in a process facilitated by CcmF and CcmH. The chain is Cytochrome c-type biogenesis protein CcmE 1 from Pseudomonas fluorescens (strain Pf0-1).